The following is a 276-amino-acid chain: MSIRKLKPTSAGRRFQTVSTFEEITRSEPEKSLTEGITSSCGRNCYGRITSRRRGGGNKRLYRIIDFKRDKFGVPAKVFSIEYDPNRSARIALLHYADGEKRYILAPVGIKVGDMITAGDAADIKPGNALQLKKIPVGTLLHNIELNPGRGGQMCRAAGTYAQLVAKEGKYALLRLPSGEVRNVLSTCLATIGQVGNVMHENISIGKAGRNRWLGKRPEVRGVAMNPVDHPLGGGEGKSSGGRHPVTPWGKPTKGYKTRNKKKPSSKLIVKRRGQK.

The segment at 224-276 (AMNPVDHPLGGGEGKSSGGRHPVTPWGKPTKGYKTRNKKKPSSKLIVKRRGQK) is disordered. The span at 254-276 (KGYKTRNKKKPSSKLIVKRRGQK) shows a compositional bias: basic residues.

Belongs to the universal ribosomal protein uL2 family. Part of the 50S ribosomal subunit. Forms a bridge to the 30S subunit in the 70S ribosome.

Its function is as follows. One of the primary rRNA binding proteins. Required for association of the 30S and 50S subunits to form the 70S ribosome, for tRNA binding and peptide bond formation. It has been suggested to have peptidyltransferase activity; this is somewhat controversial. Makes several contacts with the 16S rRNA in the 70S ribosome. The chain is Large ribosomal subunit protein uL2 from Solidesulfovibrio magneticus (strain ATCC 700980 / DSM 13731 / RS-1) (Desulfovibrio magneticus).